A 1342-amino-acid chain; its full sequence is DNA-directed RNA polymerase subunit beta (1342 aa).

Belongs to the RNA polymerase beta chain family. In terms of assembly, the RNAP catalytic core consists of 2 alpha, 1 beta, 1 beta' and 1 omega subunit. When a sigma factor is associated with the core the holoenzyme is formed, which can initiate transcription.

The catalysed reaction is RNA(n) + a ribonucleoside 5'-triphosphate = RNA(n+1) + diphosphate. Functionally, DNA-dependent RNA polymerase catalyzes the transcription of DNA into RNA using the four ribonucleoside triphosphates as substrates. In Aeromonas hydrophila subsp. hydrophila (strain ATCC 7966 / DSM 30187 / BCRC 13018 / CCUG 14551 / JCM 1027 / KCTC 2358 / NCIMB 9240 / NCTC 8049), this protein is DNA-directed RNA polymerase subunit beta.